The primary structure comprises 1042 residues: Isoleucine--tRNA ligase (1042 aa).

Positions 48 to 58 match the 'HIGH' region motif; the sequence is PFATGLPHFGH. The short motif at 594-598 is the 'KMSKS' region element; that stretch reads KMSKS. Lys-597 provides a ligand contact to ATP.

This sequence belongs to the class-I aminoacyl-tRNA synthetase family. IleS type 2 subfamily. As to quaternary structure, monomer. The cofactor is Zn(2+).

It is found in the cytoplasm. The catalysed reaction is tRNA(Ile) + L-isoleucine + ATP = L-isoleucyl-tRNA(Ile) + AMP + diphosphate. Catalyzes the attachment of isoleucine to tRNA(Ile). As IleRS can inadvertently accommodate and process structurally similar amino acids such as valine, to avoid such errors it has two additional distinct tRNA(Ile)-dependent editing activities. One activity is designated as 'pretransfer' editing and involves the hydrolysis of activated Val-AMP. The other activity is designated 'posttransfer' editing and involves deacylation of mischarged Val-tRNA(Ile). This Borrelia garinii subsp. bavariensis (strain ATCC BAA-2496 / DSM 23469 / PBi) (Borreliella bavariensis) protein is Isoleucine--tRNA ligase.